The chain runs to 1071 residues: ATP-dependent helicase/deoxyribonuclease subunit B (1071 aa).

It belongs to the helicase family. AddB/RexB type 2 subfamily. Heterodimer of AddA and RexB. Requires Mg(2+) as cofactor.

The heterodimer acts as both an ATP-dependent DNA helicase and an ATP-dependent, dual-direction single-stranded exonuclease. Recognizes the chi site generating a DNA molecule suitable for the initiation of homologous recombination. This subunit has 5' -&gt; 3' nuclease activity but not helicase activity. The sequence is that of ATP-dependent helicase/deoxyribonuclease subunit B from Streptococcus pyogenes serotype M4 (strain MGAS10750).